The chain runs to 316 residues: Transmembrane protein 231 (316 aa).

A helical transmembrane segment spans residues Ala23 to Phe43. 3 N-linked (GlcNAc...) asparagine glycosylation sites follow: Asn194, Asn199, and Asn221. A helical membrane pass occupies residues Phe262–Trp282.

The protein belongs to the TMEM231 family. As to quaternary structure, part of the tectonic-like complex (also named B9 complex). Interacts with TMEM107.

It is found in the cell projection. The protein resides in the cilium membrane. Its function is as follows. Transmembrane component of the tectonic-like complex, a complex localized at the transition zone of primary cilia and acting as a barrier that prevents diffusion of transmembrane proteins between the cilia and plasma membranes. Required for ciliogenesis and sonic hedgehog/SHH signaling. The protein is Transmembrane protein 231 (TMEM231) of Homo sapiens (Human).